We begin with the raw amino-acid sequence, 339 residues long: Glycerol-3-phosphate dehydrogenase [NAD(P)+] (339 aa).

NADPH contacts are provided by Ser-13, Trp-14, and Lys-108. Residues Lys-108, Gly-139, and Ser-141 each coordinate sn-glycerol 3-phosphate. Ala-143 contacts NADPH. 5 residues coordinate sn-glycerol 3-phosphate: Lys-194, Asp-247, Ser-257, Arg-258, and Asn-259. Residue Lys-194 is the Proton acceptor of the active site. Position 258 (Arg-258) interacts with NADPH. The NADPH site is built by Val-282 and Glu-284.

It belongs to the NAD-dependent glycerol-3-phosphate dehydrogenase family.

It localises to the cytoplasm. It carries out the reaction sn-glycerol 3-phosphate + NAD(+) = dihydroxyacetone phosphate + NADH + H(+). The catalysed reaction is sn-glycerol 3-phosphate + NADP(+) = dihydroxyacetone phosphate + NADPH + H(+). It functions in the pathway membrane lipid metabolism; glycerophospholipid metabolism. Catalyzes the reduction of the glycolytic intermediate dihydroxyacetone phosphate (DHAP) to sn-glycerol 3-phosphate (G3P), the key precursor for phospholipid synthesis. The chain is Glycerol-3-phosphate dehydrogenase [NAD(P)+] from Streptococcus equi subsp. equi (strain 4047).